The chain runs to 269 residues: Interleukin-1 beta (269 aa).

A propeptide spanning residues 1–116 is cleaved from the precursor; that stretch reads MAEVPELASE…TRNNDACVHD (116 aa).

It belongs to the IL-1 family. Monomer. In its precursor form, weakly interacts with full-length MEFV; the mature cytokine does not interact at all. Interacts with integrins ITGAV:ITGBV and ITGA5:ITGB1; integrin-binding is required for IL1B signaling. Interacts with cargo receptor TMED10; the interaction is direct and is required for the secretion of IL1B mature form. Interacts with HSP90AB1; the interaction facilitates cargo translocation into the ERGIC. Interacts with HSP90B1; the interaction facilitates cargo translocation into the ERGIC.

It is found in the cytoplasm. The protein resides in the cytosol. The protein localises to the secreted. Its subcellular location is the lysosome. It localises to the extracellular exosome. Functionally, potent pro-inflammatory cytokine. Initially discovered as the major endogenous pyrogen, induces prostaglandin synthesis, neutrophil influx and activation, T-cell activation and cytokine production, B-cell activation and antibody production, and fibroblast proliferation and collagen production. Promotes Th17 differentiation of T-cells. Synergizes with IL12/interleukin-12 to induce IFNG synthesis from T-helper 1 (Th1) cells. Plays a role in angiogenesis by inducing VEGF production synergistically with TNF and IL6. Involved in transduction of inflammation downstream of pyroptosis: its mature form is specifically released in the extracellular milieu by passing through the gasdermin-D (GSDMD) pore. In Macaca mulatta (Rhesus macaque), this protein is Interleukin-1 beta (IL1B).